The sequence spans 359 residues: Protein Wnt-5a (359 aa).

Residues 1 to 20 (MATTHLTAALALLCALLQVD) form the signal peptide. A disulfide bridge links Cys-83 with Cys-94. 2 N-linked (GlcNAc...) asparagine glycosylation sites follow: Asn-93 and Asn-99. Cystine bridges form between Cys-133–Cys-141, Cys-143–Cys-161, Cys-217–Cys-231, Cys-219–Cys-226, Cys-288–Cys-319, Cys-304–Cys-314, Cys-318–Cys-358, Cys-334–Cys-349, Cys-336–Cys-346, and Cys-341–Cys-342. The O-palmitoleoyl serine; by PORCN moiety is linked to residue Ser-223. 2 N-linked (GlcNAc...) asparagine glycosylation sites follow: Asn-291 and Asn-305.

This sequence belongs to the Wnt family. Post-translationally, palmitoleoylation is required for efficient binding to frizzled receptors. Depalmitoleoylation leads to Wnt signaling pathway inhibition. Neuroectodermal and non-neuroectodermal tissues.

The protein resides in the secreted. Its subcellular location is the extracellular space. It is found in the extracellular matrix. Ligand for members of the frizzled family of seven transmembrane receptors. Can activate or inhibit canonical Wnt signaling, depending on receptor context. Required during embryogenesis for extension of the primary anterior-posterior axis. The polypeptide is Protein Wnt-5a (WNT-5A) (Ambystoma mexicanum (Axolotl)).